A 145-amino-acid chain; its full sequence is Photosystem I reaction center subunit XI (145 aa).

3 helical membrane-spanning segments follow: residues 48–68, 75–95, and 125–145; these read LEIG…LGPL, LLVG…ALTI, and IGAL…SFFA.

This sequence belongs to the PsaL family.

The protein localises to the plastid. The protein resides in the chloroplast thylakoid membrane. This chain is Photosystem I reaction center subunit XI, found in Isochrysis galbana (Marine planktonic alga).